A 215-amino-acid chain; its full sequence is MILVLVGPPGAGKGTQAKLLCARFGIPQISTGDMLREAKRSGTLEKRYLDIMDSGGLLPDEAVIGLIARRTVEPDCSNGFLLDGFPRTVPQADALDELLASANQGGKRIDAVIQLDVARPLLEERLIHRRTDKRSGQIYHLVYNPPPPGAELEHRADDRPEAVAKRLDAYEAMTAALLPFYEQKKLLHRVDGVGKPEEVTHRVLSAIGRPGSGGE.

10 to 15 provides a ligand contact to ATP; that stretch reads GAGKGT. Residues 30–58 are NMP; sequence STGDMLREAKRSGTLEKRYLDIMDSGGLL. AMP is bound by residues T31, R36, 56-58, 84-87, and Q91; these read GLL and GFPR. The segment at 128–158 is LID; that stretch reads HRRTDKRSGQIYHLVYNPPPPGAELEHRADD. ATP contacts are provided by residues R129 and 138–139; that span reads IY. AMP is bound by residues R155 and R166. G194 contributes to the ATP binding site.

This sequence belongs to the adenylate kinase family. In terms of assembly, monomer.

Its subcellular location is the cytoplasm. It catalyses the reaction AMP + ATP = 2 ADP. Its pathway is purine metabolism; AMP biosynthesis via salvage pathway; AMP from ADP: step 1/1. Functionally, catalyzes the reversible transfer of the terminal phosphate group between ATP and AMP. Plays an important role in cellular energy homeostasis and in adenine nucleotide metabolism. The polypeptide is Adenylate kinase (Sorangium cellulosum (strain So ce56) (Polyangium cellulosum (strain So ce56))).